Reading from the N-terminus, the 106-residue chain is ATP-dependent Clp protease adapter protein ClpS (106 aa).

Belongs to the ClpS family. In terms of assembly, binds to the N-terminal domain of the chaperone ClpA.

Functionally, involved in the modulation of the specificity of the ClpAP-mediated ATP-dependent protein degradation. This is ATP-dependent Clp protease adapter protein ClpS from Salmonella arizonae (strain ATCC BAA-731 / CDC346-86 / RSK2980).